A 90-amino-acid chain; its full sequence is uncharacterized protein (90 aa).

The N-terminal stretch at 1–26 (MFESEAELRRIRIALVWIAVFLLFGA) is a signal peptide.

This is an uncharacterized protein from Bacillus subtilis (strain 168).